Here is a 305-residue protein sequence, read N- to C-terminus: HTH-type transcriptional activator BauR (305 aa).

One can recognise an HTH lysR-type domain in the interval 15–72 (FDIRLLRIFKTIVECGSFSAAESTLGLSRSAISLHMGDLEKRLGMRLCQRGRAGFALT).

It belongs to the LysR transcriptional regulatory family.

Involved in the degradation of beta-alanine. BauR activates the transcription of the bauABCD operon. The protein is HTH-type transcriptional activator BauR (bauR) of Pseudomonas aeruginosa (strain ATCC 15692 / DSM 22644 / CIP 104116 / JCM 14847 / LMG 12228 / 1C / PRS 101 / PAO1).